The chain runs to 421 residues: Testin (421 aa).

Residues M92–D199 enclose the PET domain. Residues E133–C164 are disordered. Residues P155–C164 show a composition bias toward basic and acidic residues. 3 consecutive LIM zinc-binding domains span residues Y234 to E297, P299 to V359, and Q362 to S421.

The protein belongs to the prickle / espinas / testin family. As to quaternary structure, interacts via LIM domain 1 with ZYX. Interacts (via LIM domain 3) with ENAH and VASP. Interacts with ALKBH4, talin, actin, alpha-actinin, GRIP1 and PXN. Interacts (via LIM domain 2) with ACTL7A (via N-terminus). Heterodimer with ACTL7A; the heterodimer interacts with ENAH to form a heterotrimer.

The protein resides in the cytoplasm. Its subcellular location is the cell junction. It is found in the focal adhesion. Scaffold protein that may play a role in cell adhesion, cell spreading and in the reorganization of the actin cytoskeleton. Plays a role in the regulation of cell proliferation. May act as a tumor suppressor. The chain is Testin (TES) from Colobus guereza (Mantled guereza).